A 283-amino-acid chain; its full sequence is MSQRIIQPSASDQQFPGKSDGYEYTVGPKQAITSEASTTYIPSRIYSESLLFKRQEASLSAMAFLFQEMISQLHRTCKTAGDFETKLSDYGHNIGIRLLELLNFRASVSPSSLPRASAFLSQNESSSKLSNASNSPGMLANSSTATSASANERLQEKQTESLSNYITKMRRRDLKILDILQFIHGTLWSYLFNHVSDDLVKSSERDNEYMIVDNFPTLTQFIPGENVSCEYFVCGIIKGFLFNAGFPCGVTAHRMPQGGHSQRTVYLIQFDRQVLDREGLRFG.

Residues 1-16 show a composition bias toward polar residues; sequence MSQRIIQPSASDQQFP. Disordered regions lie at residues 1-20 and 126-156; these read MSQR…GKSD and SSKL…RLQE. Over residues 126 to 151 the composition is skewed to low complexity; it reads SSKLSNASNSPGMLANSSTATSASAN.

This sequence belongs to the TRAPP small subunits family. BET3 subfamily. In terms of assembly, part of the multisubunit TRAPP (transport protein particle) I complex composed of BET3, BET5, TRS20, TRS23, TRS31 and TRS33. Part of the multisubunit TRAPP (transport protein particle) II complex composed of BET3, BET5, TRS20, TRS23, TRS31, TRS33, TRS65, TRS85, TRS120 and TRS130. Part of the multisubunit TRAPP (transport protein particle) III complex composed of BET3, BET5, TRS20, TRS23, TRS31, TRS33 and TRS85.

Its subcellular location is the golgi apparatus. It is found in the cis-Golgi network. It localises to the endoplasmic reticulum. The protein localises to the preautophagosomal structure. In terms of biological role, component of the TRAPP I, TRAPP II and TRAPP III complexes which act as guanine nucleotide exchange factors (GEF) for YPT1. TRAPP I plays a key role in the late stages of endoplasmic reticulum to Golgi traffic. TRAPP II plays a role in intra-Golgi transport. TRAPP III plays a role in autophagosome formation. The polypeptide is Trafficking protein particle complex subunit 31 (TRS31) (Saccharomyces cerevisiae (strain ATCC 204508 / S288c) (Baker's yeast)).